The following is a 179-amino-acid chain: Large ribosomal subunit protein uL6 (179 aa).

The protein belongs to the universal ribosomal protein uL6 family. In terms of assembly, part of the 50S ribosomal subunit.

Functionally, this protein binds to the 23S rRNA, and is important in its secondary structure. It is located near the subunit interface in the base of the L7/L12 stalk, and near the tRNA binding site of the peptidyltransferase center. This Saccharopolyspora erythraea (strain ATCC 11635 / DSM 40517 / JCM 4748 / NBRC 13426 / NCIMB 8594 / NRRL 2338) protein is Large ribosomal subunit protein uL6.